The primary structure comprises 441 residues: Zinc finger and BTB domain-containing protein 8A (441 aa).

The 69-residue stretch at 24–92 (CDCSILVEGK…VYSGKLSLTG (69 aa)) folds into the BTB domain. 2 stretches are compositionally biased toward polar residues: residues 143 to 170 (NGVE…SPEQ) and 178 to 196 (KSWN…TQQP). Residues 143 to 251 (NGVERSSFYS…QSEEQAQIDA (109 aa)) form a disordered region. Phosphoserine is present on residues serine 161 and serine 167. Residues lysine 178, lysine 182, lysine 191, and lysine 199 each participate in a glycyl lysine isopeptide (Lys-Gly) (interchain with G-Cter in SUMO2) cross-link. Residues 198–208 (AKHEPRKESIK) show a composition bias toward basic and acidic residues. The segment covering 234–243 (SDSSSHVSQS) has biased composition (low complexity). 2 consecutive C2H2-type zinc fingers follow at residues 282-304 (FKCP…LRCH) and 310-333 (YPCQ…RTIH). Lysine 437 is covalently cross-linked (Glycyl lysine isopeptide (Lys-Gly) (interchain with G-Cter in SUMO2)).

It is found in the nucleus. Functionally, may be involved in transcriptional regulation. The chain is Zinc finger and BTB domain-containing protein 8A (ZBTB8A) from Homo sapiens (Human).